A 299-amino-acid chain; its full sequence is Glutamyl-Q tRNA(Asp) synthetase (299 aa).

L-glutamate is bound by residues Arg9–Ser13 and Glu45. The 'HIGH' region signature appears at Pro12–Ser22. Cys101, Cys103, and Cys118 together coordinate Zn(2+). Residues Tyr170 and Arg188 each contribute to the L-glutamate site. The 'KMSKS' region motif lies at Lys226–Ser230. Lys229 is a binding site for ATP. Residues Gln279–Asp299 are disordered. Residues Arg285–Asp299 show a composition bias toward basic and acidic residues.

It belongs to the class-I aminoacyl-tRNA synthetase family. GluQ subfamily. Zn(2+) serves as cofactor.

Its function is as follows. Catalyzes the tRNA-independent activation of glutamate in presence of ATP and the subsequent transfer of glutamate onto a tRNA(Asp). Glutamate is transferred on the 2-amino-5-(4,5-dihydroxy-2-cyclopenten-1-yl) moiety of the queuosine in the wobble position of the QUC anticodon. The protein is Glutamyl-Q tRNA(Asp) synthetase of Xanthomonas oryzae pv. oryzae (strain KACC10331 / KXO85).